We begin with the raw amino-acid sequence, 316 residues long: L-lactate dehydrogenase (316 aa).

NAD(+) is bound by residues valine 15, aspartate 37, lysine 42, tyrosine 68, and 82–83 (GL). Residues glutamine 85, arginine 91, and 123 to 126 (NPVD) contribute to the substrate site. Residues 121-123 (ASN) and threonine 146 each bind NAD(+). 151-154 (DTSR) serves as a coordination point for substrate. The beta-D-fructose 1,6-bisphosphate site is built by arginine 156 and histidine 171. The active-site Proton acceptor is the histidine 178. A Phosphotyrosine modification is found at tyrosine 222. Threonine 231 is a substrate binding site.

Belongs to the LDH/MDH superfamily. LDH family. As to quaternary structure, homotetramer.

It is found in the cytoplasm. The enzyme catalyses (S)-lactate + NAD(+) = pyruvate + NADH + H(+). It participates in fermentation; pyruvate fermentation to lactate; (S)-lactate from pyruvate: step 1/1. With respect to regulation, allosterically activated by fructose 1,6-bisphosphate (FBP). Functionally, catalyzes the conversion of lactate to pyruvate. In Borreliella afzelii (strain PKo) (Borrelia afzelii), this protein is L-lactate dehydrogenase.